The chain runs to 905 residues: Phosphatidylethanolamine N-methyltransferase (905 aa).

Polar residues-rich tracts occupy residues 1-22 (MTNQIPSASSAADFGSSKSTSV) and 40-58 (DSNGLQQTNQIEQAESSLN). Residues 1–73 (MTNQIPSASS…SEPERYGCTP (73 aa)) are disordered. The Lumenal portion of the chain corresponds to 1-104 (MTNQIPSASS…DPRFSKTPWD (104 aa)). A helical membrane pass occupies residues 105-125 (WIVISSILAQVLLFFMTTGAV). Topologically, residues 126 to 128 (RRY) are cytoplasmic. A helical transmembrane segment spans residues 129 to 149 (SMMLCFFFWRISYDAGIGFLL). The Lumenal portion of the chain corresponds to 150–209 (HMQSNHRKVVTWISDFGFFDKENHPKLYDLTKKQLISKMDSSYNYDTSPLEFNSWLVFRH). The helical transmembrane segment at 210–230 (FVDLILMCDFCSYILMGLAWT) threads the bilayer. At 231 to 236 (CWPKVN) the chain is on the cytoplasmic side. The chain crosses the membrane as a helical span at residues 237–257 (IILQFLRIFGGIALIVFNYWV). Residues 258-268 (KMDAHRVVRDY) lie on the Lumenal side of the membrane. Residues 269–289 (AWYWGDFFFLLRSSLVFNGVF) traverse the membrane as a helical segment. The Cytoplasmic portion of the chain corresponds to 290–313 (ELAPHPMYSVGYAGYYGMSLLTGS). A helical membrane pass occupies residues 314–334 (YAVLFASILAHAAQFGFLLFV). At 335 to 379 (ENPHIERTYGTDINHARLSPRGEDNEFELPPEHDLVGFVNFDFTR) the chain is on the lumenal side. Serine 353 carries the phosphoserine modification. Residues 380-400 (ISDVALLIIALYSIFIILLSS) traverse the membrane as a helical segment. Over 401–408 (NSHYSQFW) the chain is Cytoplasmic. A helical membrane pass occupies residues 409–429 (AIFQAFVWRFLHSIIHAFILF). The Lumenal portion of the chain corresponds to 430-456 (YQSKSKAWTKHFIRNGESAAYAWSQWK). The chain crosses the membrane as a helical span at residues 457 to 479 (GLYNLTLNMSYISFVMAAWKLYH). The Cytoplasmic segment spans residues 480–493 (LPSNWTYGLVSLRH). Residues 494–514 (ALGFGLIALHIYTSVSIYEDL) form a helical membrane-spanning segment. At 515-552 (GQYGWFYGDFFLPSRSPKLVYQGIYRYVNNPERFLGCS) the chain is on the lumenal side. A helical membrane pass occupies residues 553–573 (AYWGLALISSSAWIFLIAILA). Topologically, residues 574–905 (QLSNLAIIRL…FDGPSGAKDD (332 aa)) are cytoplasmic.

Belongs to the class VI-like SAM-binding methyltransferase superfamily. CHO2 family.

It localises to the endoplasmic reticulum membrane. It carries out the reaction a 1,2-diacyl-sn-glycero-3-phosphoethanolamine + S-adenosyl-L-methionine = a 1,2-diacyl-sn-glycero-3-phospho-N-methylethanolamine + S-adenosyl-L-homocysteine + H(+). The protein operates within phospholipid metabolism; phosphatidylcholine biosynthesis. In terms of biological role, catalyzes the first step of the methylation pathway of phosphatidylcholine biosynthesis, the SAM-dependent methylation of phosphatidylethanolamine (PE) to phosphatidylmonomethylethanolamine (PMME). The protein is Phosphatidylethanolamine N-methyltransferase of Schizosaccharomyces pombe (strain 972 / ATCC 24843) (Fission yeast).